The sequence spans 229 residues: Cytidylate kinase (229 aa).

ATP is bound at residue 10 to 18 (GFSSCGKST).

This sequence belongs to the cytidylate kinase family. Type 1 subfamily.

It localises to the cytoplasm. It catalyses the reaction CMP + ATP = CDP + ADP. It carries out the reaction dCMP + ATP = dCDP + ADP. The protein is Cytidylate kinase of Bacteroides thetaiotaomicron (strain ATCC 29148 / DSM 2079 / JCM 5827 / CCUG 10774 / NCTC 10582 / VPI-5482 / E50).